Here is a 273-residue protein sequence, read N- to C-terminus: Pantothenate synthetase (273 aa).

27–34 (MGALHAGH) serves as a coordination point for ATP. The active-site Proton donor is the H34. Q58 contributes to the (R)-pantoate binding site. Q58 lines the beta-alanine pocket. 144-147 (GKKD) contacts ATP. Q150 lines the (R)-pantoate pocket. Residues V173 and 181–184 (LSSR) contribute to the ATP site.

It belongs to the pantothenate synthetase family. As to quaternary structure, homodimer.

The protein resides in the cytoplasm. The catalysed reaction is (R)-pantoate + beta-alanine + ATP = (R)-pantothenate + AMP + diphosphate + H(+). It participates in cofactor biosynthesis; (R)-pantothenate biosynthesis; (R)-pantothenate from (R)-pantoate and beta-alanine: step 1/1. In terms of biological role, catalyzes the condensation of pantoate with beta-alanine in an ATP-dependent reaction via a pantoyl-adenylate intermediate. The polypeptide is Pantothenate synthetase (Campylobacter hominis (strain ATCC BAA-381 / DSM 21671 / CCUG 45161 / LMG 19568 / NCTC 13146 / CH001A)).